Here is a 128-residue protein sequence, read N- to C-terminus: Small ribosomal subunit protein uS8 (128 aa).

The protein belongs to the universal ribosomal protein uS8 family. In terms of assembly, part of the 30S ribosomal subunit. Contacts proteins S5 and S12.

Its function is as follows. One of the primary rRNA binding proteins, it binds directly to 16S rRNA central domain where it helps coordinate assembly of the platform of the 30S subunit. In Methylacidiphilum infernorum (isolate V4) (Methylokorus infernorum (strain V4)), this protein is Small ribosomal subunit protein uS8.